The following is a 407-amino-acid chain: Phosphonoacetate hydrolase (407 aa).

Residues aspartate 25, threonine 64, aspartate 202, histidine 206, aspartate 241, histidine 242, and histidine 368 each contribute to the Zn(2+) site. Residues threonine 64 and aspartate 202 each contribute to the substrate site. The substrate site is built by histidine 242 and histidine 368.

This sequence belongs to the alkaline phosphatase family. PhnA subfamily. In terms of assembly, homodimer. It depends on Zn(2+) as a cofactor.

It carries out the reaction phosphonoacetate + H2O = acetate + phosphate + H(+). Its function is as follows. Specifically hydrolyzes phosphonoacetate. Does not have activity on other organophosphonates or acetates. This is Phosphonoacetate hydrolase from Pseudomonas cedrina.